The sequence spans 126 residues: Fluoride-specific ion channel FluC (126 aa).

4 helical membrane passes run 4–24 (SLLS…FVGL), 35–55 (LGTI…IALF), 67–87 (FVIT…AEVI), and 97–117 (FAIA…VLGL). 2 residues coordinate Na(+): Gly74 and Thr77.

Belongs to the fluoride channel Fluc/FEX (TC 1.A.43) family.

It is found in the cell inner membrane. The enzyme catalyses fluoride(in) = fluoride(out). Its activity is regulated as follows. Na(+) is not transported, but it plays an essential structural role and its presence is essential for fluoride channel function. Its function is as follows. Fluoride-specific ion channel. Important for reducing fluoride concentration in the cell, thus reducing its toxicity. This Acinetobacter baylyi (strain ATCC 33305 / BD413 / ADP1) protein is Fluoride-specific ion channel FluC.